A 328-amino-acid chain; its full sequence is Phosphate acyltransferase (328 aa).

The protein belongs to the PlsX family. Homodimer. Probably interacts with PlsY.

The protein resides in the cytoplasm. The enzyme catalyses a fatty acyl-[ACP] + phosphate = an acyl phosphate + holo-[ACP]. It functions in the pathway lipid metabolism; phospholipid metabolism. Functionally, catalyzes the reversible formation of acyl-phosphate (acyl-PO(4)) from acyl-[acyl-carrier-protein] (acyl-ACP). This enzyme utilizes acyl-ACP as fatty acyl donor, but not acyl-CoA. This is Phosphate acyltransferase from Staphylococcus aureus (strain MSSA476).